The following is a 95-amino-acid chain: Aspartyl/glutamyl-tRNA(Asn/Gln) amidotransferase subunit C (95 aa).

Belongs to the GatC family. Heterotrimer of A, B and C subunits.

The catalysed reaction is L-glutamyl-tRNA(Gln) + L-glutamine + ATP + H2O = L-glutaminyl-tRNA(Gln) + L-glutamate + ADP + phosphate + H(+). The enzyme catalyses L-aspartyl-tRNA(Asn) + L-glutamine + ATP + H2O = L-asparaginyl-tRNA(Asn) + L-glutamate + ADP + phosphate + 2 H(+). Functionally, allows the formation of correctly charged Asn-tRNA(Asn) or Gln-tRNA(Gln) through the transamidation of misacylated Asp-tRNA(Asn) or Glu-tRNA(Gln) in organisms which lack either or both of asparaginyl-tRNA or glutaminyl-tRNA synthetases. The reaction takes place in the presence of glutamine and ATP through an activated phospho-Asp-tRNA(Asn) or phospho-Glu-tRNA(Gln). In Brucella anthropi (strain ATCC 49188 / DSM 6882 / CCUG 24695 / JCM 21032 / LMG 3331 / NBRC 15819 / NCTC 12168 / Alc 37) (Ochrobactrum anthropi), this protein is Aspartyl/glutamyl-tRNA(Asn/Gln) amidotransferase subunit C.